Reading from the N-terminus, the 349-residue chain is Core protein VP7 (349 aa).

Residues asparagine 193 and asparagine 287 are each glycosylated (N-linked (GlcNAc...) asparagine; by host).

It belongs to the orbivirus VP7 family. In terms of assembly, homotrimer that assemble in a complex of 260 capsomers on an inner scaffold composed of VP3.

It is found in the virion. The VP7 protein is one of the five proteins (with VP1, VP3, VP4, and VP6) which form the inner capsid of the virus. The chain is Core protein VP7 (Segment-7) from Antilocapra americana (Pronghorn).